The following is a 297-amino-acid chain: Acetylglutamate kinase (297 aa).

Substrate is bound by residues Gly-68–Gly-69, Arg-90, and Asn-195.

Belongs to the acetylglutamate kinase family. ArgB subfamily.

It is found in the cytoplasm. The enzyme catalyses N-acetyl-L-glutamate + ATP = N-acetyl-L-glutamyl 5-phosphate + ADP. Its pathway is amino-acid biosynthesis; L-arginine biosynthesis; N(2)-acetyl-L-ornithine from L-glutamate: step 2/4. Its function is as follows. Catalyzes the ATP-dependent phosphorylation of N-acetyl-L-glutamate. This is Acetylglutamate kinase from Mesorhizobium japonicum (strain LMG 29417 / CECT 9101 / MAFF 303099) (Mesorhizobium loti (strain MAFF 303099)).